A 1411-amino-acid polypeptide reads, in one-letter code: DNA-directed RNA polymerase subunit beta' (1411 aa).

The Zn(2+) site is built by Cys-69, Cys-71, Cys-84, and Cys-87. Mg(2+) is bound by residues Asp-461, Asp-463, and Asp-465. 4 residues coordinate Zn(2+): Cys-809, Cys-883, Cys-890, and Cys-893.

It belongs to the RNA polymerase beta' chain family. As to quaternary structure, the RNAP catalytic core consists of 2 alpha, 1 beta, 1 beta' and 1 omega subunit. When a sigma factor is associated with the core the holoenzyme is formed, which can initiate transcription. Mg(2+) is required as a cofactor. Requires Zn(2+) as cofactor.

The catalysed reaction is RNA(n) + a ribonucleoside 5'-triphosphate = RNA(n+1) + diphosphate. Functionally, DNA-dependent RNA polymerase catalyzes the transcription of DNA into RNA using the four ribonucleoside triphosphates as substrates. In Ehrlichia ruminantium (strain Gardel), this protein is DNA-directed RNA polymerase subunit beta'.